A 710-amino-acid polypeptide reads, in one-letter code: F-box only protein 40 (710 aa).

Residues 53–114 (EHTLLCPLEQ…VDSETFLHEN (62 aa)) form a TRAF-type zinc finger. Disordered stretches follow at residues 152-174 (DATEEEPDMNGDTSWEETGGAVG) and 234-279 (GSLG…SQEL). The segment covering 238–248 (KSEDKNGDVAG) has biased composition (basic and acidic residues). An F-box domain is found at 572–626 (LNSLTSLPLEVLQYIAGFLDSISLSQLSQVSVLMRNICATLLQERGMVLSQWKKK).

Directly interacts with SKP1 and CUL1. In terms of tissue distribution, expressed only in heart and skeletal muscle.

The protein localises to the cytoplasm. Probable substrate-recognition component of the SCF (SKP1-CUL1-F-box protein)-type E3 ubiquitin ligase complex that may function in myogenesis. This chain is F-box only protein 40 (Fbxo40), found in Mus musculus (Mouse).